The sequence spans 541 residues: Putative transferase YhbX (541 aa).

Over 1 to 60 the chain is Periplasmic; that stretch reads MTVFNKFARSFKSHWLLYLSVIVFGITNLVASSGAHMVQRLLFFVLTILVVKRISSLPLR. The chain crosses the membrane as a helical span at residues 61–81; it reads LLVAAPFVLLTAADMSISLYS. Residues 82–110 lie on the Cytoplasmic side of the membrane; that stretch reads WCTFGTTFNDGFAISVLQSDPDEVAKMLG. A helical transmembrane segment spans residues 111-131; the sequence is MYSPYLCAFAFLSLLFLAVII. The Periplasmic segment spans residues 132–141; that stretch reads KYDVSLPTKK. The chain crosses the membrane as a helical span at residues 142–162; sequence VTGILLLIVISGSLFSACQFA. Residues 163 to 264 are Cytoplasmic-facing; it reads YKDAKNKNAF…RKQIKLFNQA (102 aa). A helical membrane pass occupies residues 265 to 285; that stretch reads ISGAPYTALSVPLSLTADSVL. Topologically, residues 286–541 are periplasmic; sequence SHDIHNYPDN…QGNPTPEGQG (256 aa).

The protein belongs to the phosphoethanolamine transferase family.

The protein localises to the cell inner membrane. There are several lipid A forms in this strain, including a phosphoethanolamine (1-O-P-pEtN) form; overexpression of this gene does not lead to higher levels of the 1-O-P-pEtN form of lipid A. This chain is Putative transferase YhbX (yhbX), found in Escherichia coli O157:H7.